Consider the following 349-residue polypeptide: UDP-glucose 4-epimerase (349 aa).

NAD(+)-binding positions include 10–12 (GFI), 31–35 (DNFAN), 66–67 (DV), and K92. A substrate-binding site is contributed by 132–134 (SAT). The active-site Proton acceptor is Y158. NAD(+)-binding residues include K162 and Y186. Residues 186–188 (YFN), 207–209 (NNL), 225–227 (TIY), R240, and 303–306 (RPGD) each bind substrate.

This sequence belongs to the NAD(P)-dependent epimerase/dehydratase family. It depends on NAD(+) as a cofactor. Expressed in gonads, vulva, intestine, hypdermis and nervous system.

It catalyses the reaction UDP-alpha-D-glucose = UDP-alpha-D-galactose. The enzyme catalyses UDP-N-acetyl-alpha-D-glucosamine = UDP-N-acetyl-alpha-D-galactosamine. The protein operates within carbohydrate metabolism; galactose metabolism. In terms of biological role, catalyzes two distinct but analogous reactions: the reversible epimerization of UDP-glucose to UDP-galactose and the reversible epimerization of UDP-N-acetylglucosamine to UDP-N-acetylgalactosamine. The reaction with UDP-Gal plays a critical role in the Leloir pathway of galactose catabolism in which galactose is converted to the glycolytic intermediate glucose 6-phosphate. It contributes to the catabolism of dietary galactose and enables the endogenous biosynthesis of both UDP-Gal and UDP-GalNAc when exogenous sources are limited. Both UDP-sugar interconversions are important for the synthesis of glycoproteins and glycolipids. The sequence is that of UDP-glucose 4-epimerase from Caenorhabditis elegans.